The primary structure comprises 75 residues: Small ribosomal subunit protein bS18 (75 aa).

This sequence belongs to the bacterial ribosomal protein bS18 family. As to quaternary structure, part of the 30S ribosomal subunit. Forms a tight heterodimer with protein bS6.

In terms of biological role, binds as a heterodimer with protein bS6 to the central domain of the 16S rRNA, where it helps stabilize the platform of the 30S subunit. The protein is Small ribosomal subunit protein bS18 of Saccharophagus degradans (strain 2-40 / ATCC 43961 / DSM 17024).